We begin with the raw amino-acid sequence, 612 residues long: Proline-rich protein 14 (612 aa).

M1 carries the N-acetylmethionine modification. 2 stretches are compositionally biased toward polar residues: residues 1–15 (MDLP…QPSL) and 86–96 (VCTQSPALPSQ). 4 disordered regions span residues 1–48 (MDLP…EKAS), 65–96 (VPLT…LPSQ), 119–150 (RARQ…QVPQ), and 206–256 (PTLT…PALE). Positions 1-135 (MDLPGNSSPF…ALRMRSRAAS (135 aa)) are sufficient for heterochromatin association in interphase and chromatin association in anaphase. Positions 85 to 405 (PVCTQSPALP…MARTPPPPRP (321 aa)) are required for the interaction with GRB2 and sufficient to promote the phosphorylation of AKT and cell proliferation. The tract at residues 136–392 (GPEESPSKKT…QSRPRRHTVG (257 aa)) is required for nuclear lamina association. Over residues 243–252 (ADPPESPVPD) the composition is skewed to pro residues. S307 is subject to Phosphoserine. Disordered stretches follow at residues 323 to 405 (QSRA…PPRP), 444 to 463 (LGST…FSDP), and 553 to 583 (DSSL…PSQD). The segment covering 342–359 (WRTQCNSLAPVSKSSLGR) has biased composition (polar residues). A compositionally biased stretch (pro residues) spans 366 to 379 (LGPPDPGSWPPVPS). Residues 448–463 (KGKELRASKDKVFSDP) are compositionally biased toward basic and acidic residues. The tract at residues 546 to 563 (RRAVEFRDSSLPRSRRPS) is required for nuclear localization. Over residues 570-583 (ASRTLTPNLAPSQD) the composition is skewed to polar residues.

Interacts (via proline-rich region) with GRB2 (via SH3 domain 2). Interacts (via N-terminus) with CBX5.

The protein localises to the chromosome. The protein resides in the nucleus. It localises to the nucleus lamina. It is found in the nucleoplasm. In terms of biological role, functions in tethering peripheral heterochromatin to the nuclear lamina during interphase, possibly through the interaction with heterochromatin protein CBX5/HP1 alpha. Might play a role in reattaching heterochromatin to the nuclear lamina at mitotic exit. Promotes myoblast differentiation during skeletal myogenesis, possibly by stimulating transcription factor MyoD activity via binding to CBX5/HP1 alpha. Involved in the positive regulation of the PI3K-Akt-mTOR signaling pathway and in promoting cell proliferation, possibly via binding to GRB2. This is Proline-rich protein 14 (Prr14) from Mus musculus (Mouse).